The sequence spans 400 residues: tRNA(Met) cytidine acetate ligase (400 aa).

Residues 7–20 (IVEY…HLYH), Gly-101, Asn-159, and 184–185 (RI) each bind ATP.

The protein belongs to the TmcAL family.

It is found in the cytoplasm. The enzyme catalyses cytidine(34) in elongator tRNA(Met) + acetate + ATP = N(4)-acetylcytidine(34) in elongator tRNA(Met) + AMP + diphosphate. In terms of biological role, catalyzes the formation of N(4)-acetylcytidine (ac(4)C) at the wobble position of elongator tRNA(Met), using acetate and ATP as substrates. First activates an acetate ion to form acetyladenylate (Ac-AMP) and then transfers the acetyl group to tRNA to form ac(4)C34. This chain is tRNA(Met) cytidine acetate ligase, found in Caldicellulosiruptor bescii (strain ATCC BAA-1888 / DSM 6725 / KCTC 15123 / Z-1320) (Anaerocellum thermophilum).